The primary structure comprises 595 residues: D-xylonate dehydratase (595 aa).

C64 serves as a coordination point for [2Fe-2S] cluster. Mg(2+) is bound at residue E96. C132 is a [2Fe-2S] cluster binding site. Mg(2+) is bound at residue D133. C205 serves as a coordination point for [2Fe-2S] cluster. Mg(2+) is bound at residue E467.

It belongs to the IlvD/Edd family. Homotetramer. [2Fe-2S] cluster is required as a cofactor. Requires Mg(2+) as cofactor.

It catalyses the reaction D-xylonate = 2-dehydro-3-deoxy-D-arabinonate + H2O. The catalysed reaction is D-gluconate = 2-dehydro-3-deoxy-D-gluconate + H2O. It functions in the pathway carbohydrate metabolism; D-xylose degradation. Its function is as follows. Catalyzes the dehydration of D-xylonate to 2-dehydro-3-deoxy-D-arabinonate during D-xylose degradation. Can also dehydrate D-gluconate, with similar catalytic efficiency. Has weak activity with D-galactonate, D-fuconate and L-arabinonate. The chain is D-xylonate dehydratase from Caulobacter vibrioides (strain ATCC 19089 / CIP 103742 / CB 15) (Caulobacter crescentus).